A 443-amino-acid polypeptide reads, in one-letter code: ATP-dependent protease ATPase subunit HslU (443 aa).

Residues Ile-18, 60-65 (GVGKTE), Asp-256, Glu-321, and Arg-393 contribute to the ATP site.

The protein belongs to the ClpX chaperone family. HslU subfamily. In terms of assembly, a double ring-shaped homohexamer of HslV is capped on each side by a ring-shaped HslU homohexamer. The assembly of the HslU/HslV complex is dependent on binding of ATP.

The protein localises to the cytoplasm. ATPase subunit of a proteasome-like degradation complex; this subunit has chaperone activity. The binding of ATP and its subsequent hydrolysis by HslU are essential for unfolding of protein substrates subsequently hydrolyzed by HslV. HslU recognizes the N-terminal part of its protein substrates and unfolds these before they are guided to HslV for hydrolysis. This chain is ATP-dependent protease ATPase subunit HslU, found in Escherichia fergusonii (strain ATCC 35469 / DSM 13698 / CCUG 18766 / IAM 14443 / JCM 21226 / LMG 7866 / NBRC 102419 / NCTC 12128 / CDC 0568-73).